A 995-amino-acid chain; its full sequence is Probable copper-transporting ATPase HMA5 (995 aa).

The Cytoplasmic segment spans residues M1–S299. HMA domains follow at residues S51–S117 and Q129–V195. Cu(+) contacts are provided by C62, C65, C140, and C143. One can recognise an HMA 3; degenerate domain in the interval S204–S270. The helical transmembrane segment at F300–P321 threads the bilayer. Residues G322 to I340 are Extracellular-facing. A helical membrane pass occupies residues I341 to G360. Over S361–R367 the chain is Cytoplasmic. A helical transmembrane segment spans residues G368–L388. Topologically, residues Y389–F406 are extracellular. Residues E407–K427 traverse the membrane as a helical segment. Over G428–R561 the chain is Cytoplasmic. A helical transmembrane segment spans residues I562–A584. Residues G585–A605 are Extracellular-facing. Residues L606 to L623 traverse the membrane as a helical segment. At A624–I920 the chain is on the cytoplasmic side. D661 functions as the 4-aspartylphosphate intermediate in the catalytic mechanism. Positions 866 and 870 each coordinate Mg(2+). The helical transmembrane segment at R921 to G940 threads the bilayer. The Extracellular segment spans residues V941 to P952. A helical membrane pass occupies residues W953 to L971. The Cytoplasmic segment spans residues L972 to V995.

The protein belongs to the cation transport ATPase (P-type) (TC 3.A.3) family. Type IB subfamily. Interacts with ATX1. In terms of tissue distribution, expressed in roots and flowers.

Its subcellular location is the membrane. The enzyme catalyses Cu(+)(in) + ATP + H2O = Cu(+)(out) + ADP + phosphate + H(+). Functionally, involved in copper import into the cell. May play a role in copper detoxification in roots. The polypeptide is Probable copper-transporting ATPase HMA5 (HMA5) (Arabidopsis thaliana (Mouse-ear cress)).